The sequence spans 625 residues: Procollagen galactosyltransferase 2 (625 aa).

The N-terminal stretch at 1 to 26 is a signal peptide; the sequence is MAARLATVACALFLLSSALLRLGCRA. N96, N184, N381, and N579 each carry an N-linked (GlcNAc...) asparagine glycan. A disordered region spans residues 597-625; sequence QGHIRSTAKNTEALPPPTSLDTVPSRDEL. The Prevents secretion from ER signature appears at 622-625; the sequence is RDEL.

This sequence belongs to the glycosyltransferase 25 family.

It is found in the endoplasmic reticulum lumen. The catalysed reaction is (5R)-5-hydroxy-L-lysyl-[collagen] + UDP-alpha-D-galactose = (5R)-5-O-(beta-D-galactosyl)-5-hydroxy-L-lysyl-[collagen] + UDP + H(+). In terms of biological role, beta-galactosyltransferase that transfers beta-galactose to hydroxylysine residues of collagen. In Mus musculus (Mouse), this protein is Procollagen galactosyltransferase 2 (Colgalt2).